Reading from the N-terminus, the 183-residue chain is Probable chorismate pyruvate-lyase 2 (183 aa).

Substrate-binding residues include R76, L114, and E166.

This sequence belongs to the UbiC family.

The protein localises to the cytoplasm. The enzyme catalyses chorismate = 4-hydroxybenzoate + pyruvate. Its pathway is cofactor biosynthesis; ubiquinone biosynthesis. Functionally, removes the pyruvyl group from chorismate, with concomitant aromatization of the ring, to provide 4-hydroxybenzoate (4HB) for the ubiquinone pathway. The sequence is that of Probable chorismate pyruvate-lyase 2 from Pseudomonas fluorescens (strain Pf0-1).